A 352-amino-acid polypeptide reads, in one-letter code: Protein Wnt-3a (352 aa).

The N-terminal stretch at 1–18 (MAPLGYFLLLCSLKQALG) is a signal peptide. 11 disulfides stabilise this stretch: Cys77–Cys88, Cys128–Cys136, Cys138–Cys155, Cys203–Cys217, Cys205–Cys212, Cys281–Cys312, Cys297–Cys307, Cys311–Cys351, Cys327–Cys342, Cys329–Cys339, and Cys334–Cys335. A glycan (N-linked (GlcNAc...) asparagine) is linked at Asn87. Ser209 carries O-palmitoleoyl serine; by PORCN lipidation. N-linked (GlcNAc...) asparagine glycosylation is present at Asn298.

The protein belongs to the Wnt family. Forms a soluble 1:1 complex with AFM; this prevents oligomerization and is required for prolonged biological activity. The complex with AFM may represent the physiological form in body fluids. Homooligomer; disulfide-linked, leading to inactivation. Interacts with PORCN. Interacts with APCDD1 and WLS. Component of the Wnt-Fzd-LRP5-LRP6 signaling complex that contains a WNT protein, a FZD protein and LRP5 or LRP6. Interacts directly in the complex with LRP6. Interacts with glypican GPC3. Interacts with PKD1 (via extracellular domain). Interacts with FZD5. Palmitoleoylation by PORCN is required for efficient binding to frizzled receptors. Palmitoleoylation is required for proper trafficking to cell surface, vacuolar acidification is critical to release palmitoleoylated WNT3A from WLS in secretory vesicles. Depalmitoleoylated by NOTUM, leading to inhibit Wnt signaling pathway, possibly by promoting disulfide bond formation and oligomerization. In terms of processing, proteolytic processing by TIKI1 and TIKI2 promotes oxidation and formation of large disulfide-bond oligomers, leading to inactivation of WNT3A. Post-translationally, disulfide bonds have critical and distinct roles in secretion and activity. Loss of each conserved cysteine in WNT3A results in high molecular weight oxidized Wnt oligomers, which are formed through inter-Wnt disulfide bonding. Moderately expressed in placenta and at low levels in adult lung, spleen, and prostate.

Its subcellular location is the secreted. The protein localises to the extracellular space. It localises to the extracellular matrix. Ligand for members of the frizzled family of seven transmembrane receptors. Functions in the canonical Wnt signaling pathway that results in activation of transcription factors of the TCF/LEF family. Required for normal embryonic mesoderm development and formation of caudal somites. Required for normal morphogenesis of the developing neural tube. Mediates self-renewal of the stem cells at the bottom on intestinal crypts (in vitro). The sequence is that of Protein Wnt-3a (WNT3A) from Homo sapiens (Human).